Reading from the N-terminus, the 826-residue chain is Eukaryotic translation initiation factor 3 subunit C (826 aa).

2 disordered regions span residues 1–71 and 205–227; these read MSRF…GKGA and SGGD…PRAK. A compositionally biased stretch (acidic residues) spans 10 to 20; the sequence is DSDDSSSDEDL. The span at 21-30 shows a compositional bias: low complexity; it reads YGSGSESGSD. Over residues 32–65 the composition is skewed to acidic residues; sequence SQDEQDGGDDNDDDMSDDSMFADDSDDDSDDDED. Basic and acidic residues predominate over residues 218-227; the sequence is KEDKPKPRAK. The PCI domain occupies 605-779; the sequence is FHTHINLELL…NSVVFTQAVQ (175 aa).

This sequence belongs to the eIF-3 subunit C family. In terms of assembly, component of the eukaryotic translation initiation factor 3 (eIF-3) complex.

It is found in the cytoplasm. In terms of biological role, component of the eukaryotic translation initiation factor 3 (eIF-3) complex, which is involved in protein synthesis of a specialized repertoire of mRNAs and, together with other initiation factors, stimulates binding of mRNA and methionyl-tRNAi to the 40S ribosome. The eIF-3 complex specifically targets and initiates translation of a subset of mRNAs involved in cell proliferation. The protein is Eukaryotic translation initiation factor 3 subunit C of Yarrowia lipolytica (strain CLIB 122 / E 150) (Yeast).